Here is a 510-residue protein sequence, read N- to C-terminus: Ninja-family protein mc410 (510 aa).

3 disordered regions span residues 1-179 (MDEN…RQIL), 323-414 (HPSH…PSEF), and 481-510 (RHASVEQTSQEPGTGVSSFPSSNPAASAQS). Basic and acidic residues-rich tracts occupy residues 31–44 (SKVEEVDRDGKVIN) and 103–146 (RPVE…DKTR). Polar residues predominate over residues 148 to 160 (SHISITTDEGSTA). Composition is skewed to basic and acidic residues over residues 363-389 (RAMEHVKGNGRQHKAEETSNSRGEENV) and 397-406 (RAKDPPDQPR). Polar residues predominate over residues 485 to 496 (VEQTSQEPGTGV). A compositionally biased stretch (low complexity) spans 497-510 (SSFPSSNPAASAQS).

It belongs to the Ninja family.

It is found in the nucleus. This is Ninja-family protein mc410 (MC410) from Nicotiana tabacum (Common tobacco).